The following is a 249-amino-acid chain: MKILVCENYDKLSEKAAQIIMSQITLKSNSILGLATGSTPIGMYKKLVEMYENKMIDFSDVKTFNLDEYQNLPISNDQSYHYFMDDNLFNYINVKRENIHIPNGMANDIENECIEYDNLIKEAGGIDIQVLGIGNNAHIGFNEPTVSFEKKTYVVELEESTKIANARFFNSLDEVPSKAITMGIGSIFESKKIMLLATGENKAKAIYDTIYGKVTPEVPASILQFHDDVIVILDKKAASLLNPKDYKVV.

Aspartate 67 functions as the Proton acceptor; for enolization step in the catalytic mechanism. The active-site For ring-opening step is asparagine 136. Histidine 138 functions as the Proton acceptor; for ring-opening step in the catalytic mechanism. Glutamate 143 serves as the catalytic For ring-opening step.

Belongs to the glucosamine/galactosamine-6-phosphate isomerase family. NagB subfamily.

The enzyme catalyses alpha-D-glucosamine 6-phosphate + H2O = beta-D-fructose 6-phosphate + NH4(+). Its pathway is amino-sugar metabolism; N-acetylneuraminate degradation; D-fructose 6-phosphate from N-acetylneuraminate: step 5/5. Catalyzes the reversible isomerization-deamination of glucosamine 6-phosphate (GlcN6P) to form fructose 6-phosphate (Fru6P) and ammonium ion. The polypeptide is Glucosamine-6-phosphate deaminase (Clostridium botulinum (strain Alaska E43 / Type E3)).